Here is a 138-residue protein sequence, read N- to C-terminus: Ribonuclease VapC21 (138 aa).

The PINc domain occupies 6–128 (LLDKSAAYRA…ERIAAITRQP (123 aa)). Residues Asp-8 and Asp-97 each contribute to the Mg(2+) site.

This sequence belongs to the PINc/VapC protein family. Mg(2+) is required as a cofactor.

In terms of biological role, toxic component of a type II toxin-antitoxin (TA) system. An RNase. Its toxic effect is neutralized by coexpression with cognate antitoxin VapB21. The polypeptide is Ribonuclease VapC21 (Mycobacterium tuberculosis (strain CDC 1551 / Oshkosh)).